We begin with the raw amino-acid sequence, 386 residues long: Acetylornithine aminotransferase (386 aa).

Pyridoxal 5'-phosphate is bound by residues 94–95 (GT) and F121. R124 contacts N(2)-acetyl-L-ornithine. 206 to 209 (DEVQ) contributes to the pyridoxal 5'-phosphate binding site. K235 is modified (N6-(pyridoxal phosphate)lysine). N(2)-acetyl-L-ornithine is bound at residue S263. T264 serves as a coordination point for pyridoxal 5'-phosphate.

Belongs to the class-III pyridoxal-phosphate-dependent aminotransferase family. ArgD subfamily. As to quaternary structure, homodimer. The cofactor is pyridoxal 5'-phosphate.

It localises to the cytoplasm. It catalyses the reaction N(2)-acetyl-L-ornithine + 2-oxoglutarate = N-acetyl-L-glutamate 5-semialdehyde + L-glutamate. The protein operates within amino-acid biosynthesis; L-arginine biosynthesis; N(2)-acetyl-L-ornithine from L-glutamate: step 4/4. This Listeria monocytogenes serovar 1/2a (strain ATCC BAA-679 / EGD-e) protein is Acetylornithine aminotransferase.